Here is a 118-residue protein sequence, read N- to C-terminus: Large ribosomal subunit protein bL20 (118 aa).

The protein belongs to the bacterial ribosomal protein bL20 family.

In terms of biological role, binds directly to 23S ribosomal RNA and is necessary for the in vitro assembly process of the 50S ribosomal subunit. It is not involved in the protein synthesizing functions of that subunit. The polypeptide is Large ribosomal subunit protein bL20 (Gluconobacter oxydans (strain 621H) (Gluconobacter suboxydans)).